The primary structure comprises 53 residues: Small ribosomal subunit protein uS14m (53 aa).

The protein belongs to the universal ribosomal protein uS14 family.

The protein localises to the mitochondrion. The chain is Small ribosomal subunit protein uS14m (RPS14) from Bigelowiella natans (Pedinomonas minutissima).